Consider the following 518-residue polypeptide: MADSTRPLLSDFNSSESNLPPPRSLEETIERCIGDFGWAQFLQAALVSFAWFFDAQQTFITVFTDSQPMWHCDNSDRVDSVCNTSSSNLCTLPNQTWSWDLNPHVSIISEWGLQCAGSFLKGFPASSFFLGCLIGGLALSTLADSSLGRKNMLLLSCLIMSLSSMLTAFSTSIWVYAFLRFLNGCGRATIGTCALVLSTELVGKKWRGQVGAMGFFCFTLGFLSLPMLGYINEGNSWRNLYVWTSIPTLIYCCLVRSFVRESPRWLIVKGRKEEAVSILQSIASNAITMSFTNLCFEVENDQSKSNPDVYDALKILVRKSWSFRRLLAAMVVGFGIGMVYYGMPLALTNLNFNLYLGVVFNALSEFPAFLITFFFIDKINRRDALIGFTALSGISSALIAVLGQQLGSLQIVLELVSFFSACTAFNMTLIYTIEMFPTCVRNSAISMVRQALVFGGVFSPVMVAAGRENQFWSYGLFGLIIGLCGLFVFGLPETRGSVLCDTMDEEEYKTLAKRQFIG.

The segment at Met-1–Arg-23 is disordered. The Cytoplasmic portion of the chain corresponds to Met-1–Cys-32. The chain crosses the membrane as a helical span at residues Ile-33–Phe-53. At Asp-54–Gly-122 the chain is on the extracellular side. 2 N-linked (GlcNAc...) asparagine glycosylation sites follow: Asn-83 and Asn-94. A helical transmembrane segment spans residues Phe-123–Ala-143. Residues Asp-144 to Cys-157 lie on the Cytoplasmic side of the membrane. A helical membrane pass occupies residues Leu-158–Phe-178. The Extracellular segment spans residues Leu-179–Arg-180. The helical transmembrane segment at Phe-181–Leu-197 threads the bilayer. Residue Ser-198 to Lys-205 participates in ATP binding. The Cytoplasmic portion of the chain corresponds to Ser-198–Val-210. Residues Gly-211–Ile-231 form a helical membrane-spanning segment. Residues Asn-232–Asn-239 lie on the Extracellular side of the membrane. Residues Leu-240–Val-259 form a helical membrane-spanning segment. The Cytoplasmic segment spans residues Arg-260–Arg-325. A helical membrane pass occupies residues Leu-326–Ala-346. The Extracellular portion of the chain corresponds to Leu-347 to Tyr-355. Residues Leu-356 to Ile-376 traverse the membrane as a helical segment. The Cytoplasmic portion of the chain corresponds to Asp-377–Asp-383. The helical transmembrane segment at Ala-384–Gln-404 threads the bilayer. The Extracellular portion of the chain corresponds to Gln-405–Gln-410. Residues Ile-411–Tyr-431 traverse the membrane as a helical segment. The Cytoplasmic portion of the chain corresponds to Thr-432–Ser-443. The helical transmembrane segment at Ala-444 to Ala-464 threads the bilayer. Residues Ala-465 to Gln-470 lie on the Extracellular side of the membrane. The chain crosses the membrane as a helical span at residues Phe-471–Leu-491. Residues Pro-492–Gly-518 are Cytoplasmic-facing.

It belongs to the major facilitator (TC 2.A.1) superfamily. Organic cation transporter (TC 2.A.1.19) family. In terms of tissue distribution, mostly expressed in siliques, mainly in young seeds. Present in stems (cortical cells and parenchyma cells), at the basis of secondary inflorescences, and at the base of trichomes.

The protein localises to the vacuole membrane. Functionally, high affinity carnitine transporter involved in the active cellular uptake of carnitine. Also transports organic cations. The polypeptide is Organic cation/carnitine transporter 3 (OCT3) (Arabidopsis thaliana (Mouse-ear cress)).